The sequence spans 293 residues: Protease HtpX (293 aa).

2 helical membrane-spanning segments follow: residues 4 to 24 and 34 to 54; these read IALF…VLSL and GLLI…LLMS. His139 lines the Zn(2+) pocket. Glu140 is a catalytic residue. His143 serves as a coordination point for Zn(2+). Helical transmembrane passes span 158 to 178 and 193 to 213; these read VVNT…AGFL and LIYF…ASII. Residue Glu222 participates in Zn(2+) binding.

Belongs to the peptidase M48B family. Zn(2+) is required as a cofactor.

The protein localises to the cell inner membrane. This chain is Protease HtpX, found in Salmonella agona (strain SL483).